The chain runs to 129 residues: Large ribosomal subunit protein bL17 (129 aa).

The protein belongs to the bacterial ribosomal protein bL17 family. As to quaternary structure, part of the 50S ribosomal subunit. Contacts protein L32.

The protein is Large ribosomal subunit protein bL17 of Serratia proteamaculans (strain 568).